A 419-amino-acid chain; its full sequence is Creatine kinase S-type, mitochondrial (419 aa).

A mitochondrion-targeting transit peptide spans 1 to 39 (MAGTFGRLLAGRVTAALFAAAGSGVLTTGYLLNQQNVKA). The 87-residue stretch at 46-132 (KLFPPSADYP…FDPVIKARHN (87 aa)) folds into the Phosphagen kinase N-terminal domain. Residues 159–401 (YVLSSRVRTG…NYLVDCEKKL (243 aa)) enclose the Phosphagen kinase C-terminal domain. ATP-binding positions include 162-166 (SSRVR), H225, R270, R326, 354-359 (RGTGGV), and D369.

It belongs to the ATP:guanido phosphotransferase family. As to quaternary structure, exists as an octamer composed of four MTCK homodimers. Expressed in the leg muscle and heart.

Its subcellular location is the mitochondrion inner membrane. The catalysed reaction is creatine + ATP = N-phosphocreatine + ADP + H(+). Reversibly catalyzes the transfer of phosphate between ATP and various phosphogens (e.g. creatine phosphate). Creatine kinase isoenzymes play a central role in energy transduction in tissues with large, fluctuating energy demands, such as skeletal muscle, heart, brain and spermatozoa. The polypeptide is Creatine kinase S-type, mitochondrial (CKMT2) (Gallus gallus (Chicken)).